The chain runs to 382 residues: uncharacterized protein (382 aa).

The next 12 membrane-spanning stretches (helical) occupy residues 14–34 (GLLL…LWLA), 45–65 (VVSS…GYVI), 79–99 (FIFA…SWLA), 102–122 (FVAG…LMCS), 131–151 (LLAA…LLVS), 157–177 (LMSV…PLLF), 204–224 (LGVN…GLMP), 235–255 (ASIG…QWPI), 270–290 (VQVF…AMAP), 291–311 (ALFI…AWAC), 325–345 (ALLL…AMLM), and 348–368 (FSDN…LLML).

The protein belongs to the major facilitator superfamily. YcaD (TC 2.A.1.26) family.

The protein resides in the cell inner membrane. This is an uncharacterized protein from Shigella flexneri serotype 5b (strain 8401).